A 633-amino-acid polypeptide reads, in one-letter code: 1-deoxy-D-xylulose-5-phosphate synthase (633 aa).

Thiamine diphosphate is bound by residues His-72 and 113–115 (GHS). Asp-144 serves as a coordination point for Mg(2+). Residues 145 to 146 (GA), Asn-173, Tyr-284, and Glu-367 each bind thiamine diphosphate. Asn-173 provides a ligand contact to Mg(2+).

The protein belongs to the transketolase family. DXPS subfamily. Homodimer. Requires Mg(2+) as cofactor. Thiamine diphosphate serves as cofactor.

It catalyses the reaction D-glyceraldehyde 3-phosphate + pyruvate + H(+) = 1-deoxy-D-xylulose 5-phosphate + CO2. It functions in the pathway metabolic intermediate biosynthesis; 1-deoxy-D-xylulose 5-phosphate biosynthesis; 1-deoxy-D-xylulose 5-phosphate from D-glyceraldehyde 3-phosphate and pyruvate: step 1/1. Catalyzes the acyloin condensation reaction between C atoms 2 and 3 of pyruvate and glyceraldehyde 3-phosphate to yield 1-deoxy-D-xylulose-5-phosphate (DXP). This chain is 1-deoxy-D-xylulose-5-phosphate synthase, found in Bacillus licheniformis (strain ATCC 14580 / DSM 13 / JCM 2505 / CCUG 7422 / NBRC 12200 / NCIMB 9375 / NCTC 10341 / NRRL NRS-1264 / Gibson 46).